We begin with the raw amino-acid sequence, 60 residues long: Large ribosomal subunit protein bL32 (60 aa).

Belongs to the bacterial ribosomal protein bL32 family.

The sequence is that of Large ribosomal subunit protein bL32 from Geobacter sulfurreducens (strain ATCC 51573 / DSM 12127 / PCA).